The sequence spans 84 residues: DNA-directed RNA polymerase subunit Rpo5 (84 aa).

Belongs to the archaeal Rpo5/eukaryotic RPB5 RNA polymerase subunit family. As to quaternary structure, part of the RNA polymerase complex.

It localises to the cytoplasm. The catalysed reaction is RNA(n) + a ribonucleoside 5'-triphosphate = RNA(n+1) + diphosphate. DNA-dependent RNA polymerase (RNAP) catalyzes the transcription of DNA into RNA using the four ribonucleoside triphosphates as substrates. The polypeptide is DNA-directed RNA polymerase subunit Rpo5 (Saccharolobus islandicus (strain Y.N.15.51 / Yellowstone #2) (Sulfolobus islandicus)).